We begin with the raw amino-acid sequence, 500 residues long: NAD(P)H-quinone oxidoreductase chain 4, chloroplastic (500 aa).

14 consecutive transmembrane segments (helical) span residues 4-24 (FPWL…MLFL), 35-55 (YTIC…CYNF), 87-107 (IGTI…AFPV), 113-130 (LFHF…GSFS), 134-154 (LLLF…LLSM), 167-187 (FILY…GISL), 211-231 (IILY…IPLH), 242-262 (HYST…YGLV), 272-292 (AHSL…IYAA), 305-325 (IAYS…SITD), 330-350 (GAIL…FLAG), 386-406 (LALP…GIIT), 416-436 (IFII…LLSM), and 462-482 (LFLS…PDFV).

It belongs to the complex I subunit 4 family.

It localises to the plastid. It is found in the chloroplast thylakoid membrane. It catalyses the reaction a plastoquinone + NADH + (n+1) H(+)(in) = a plastoquinol + NAD(+) + n H(+)(out). The catalysed reaction is a plastoquinone + NADPH + (n+1) H(+)(in) = a plastoquinol + NADP(+) + n H(+)(out). The chain is NAD(P)H-quinone oxidoreductase chain 4, chloroplastic from Aethionema cordifolium (Lebanon stonecress).